We begin with the raw amino-acid sequence, 408 residues long: Collagen and calcium-binding EGF domain-containing protein 1 (408 aa).

The signal sequence occupies residues 1 to 35 (MVPPPLPSRGGAAKRQLGKSLGPLLLLLALGHTWT). In terms of domain architecture, EGF-like; calcium-binding spans 135–176 (DIDECATSNTTLCAHICINTMGSYHCECREGYILEDDGRTCT). 3 disulfide bridges follow: cysteine 139–cysteine 151, cysteine 147–cysteine 160, and cysteine 162–cysteine 175. N-linked (GlcNAc...) asparagine glycosylation is present at asparagine 143. Asparagine 183 carries an N-linked (GlcNAc...) asparagine glycan. 2 disordered regions span residues 246–335 (YLPG…GPPG) and 361–408 (HRTH…NFYP). Collagen-like domains follow at residues 247–292 (LPGP…PMGP) and 302–335 (GRRGPVGPPGAPGRHGSKGERGAPGPPGSPGPPG). A compositionally biased stretch (pro residues) spans 272 to 281 (PGMPGPPGQP). Over residues 283-294 (PRGSMGPMGPSP) the composition is skewed to low complexity. Pro residues predominate over residues 325–334 (PGPPGSPGPP). Residue serine 387 is glycosylated (O-linked (Xyl...) (chondroitin sulfate) serine). The span at 390-402 (DYSRRTEARDPEA) shows a compositional bias: basic and acidic residues.

This sequence belongs to the CCBE1 family.

The protein localises to the secreted. Functionally, required for lymphangioblast budding and angiogenic sprouting from venous endothelium during embryogenesis. The polypeptide is Collagen and calcium-binding EGF domain-containing protein 1 (Ccbe1) (Mus musculus (Mouse)).